We begin with the raw amino-acid sequence, 722 residues long: Peroxisomal bifunctional enzyme (722 aa).

The tract at residues 1 to 281 (MAEYLRLPHS…FAEKSANKWS (281 aa)) is enoyl-CoA hydratase / isomerase. Residue Ala2 is modified to Blocked amino end (Ala). The residue at position 38 (Lys38) is an N6-succinyllysine. Gly100 is a substrate binding site. Lys173 bears the N6-acetyllysine; alternate mark. N6-succinyllysine; alternate is present on Lys173. At Lys182 the chain carries N6-succinyllysine. N6-acetyllysine; alternate is present on residues Lys190 and Lys218. N6-succinyllysine; alternate occurs at positions 190 and 218. At Lys241 the chain carries N6-succinyllysine. Residue Lys249 is modified to N6-acetyllysine. Lys253 is modified (N6-succinyllysine). Lys275 is subject to N6-acetyllysine; alternate. An N6-succinyllysine; alternate modification is found at Lys275. Lys279, Lys289, and Lys330 each carry N6-succinyllysine. The tract at residues 282 to 571 (TPSGASWKTA…DMLCEAGRFG (290 aa)) is 3-hydroxyacyl-CoA dehydrogenase. Residues Lys345, Lys359, and Lys463 each carry the N6-acetyllysine modification. Position 531 is an N6-succinyllysine (Lys531). A Phosphothreonine modification is found at Thr547. N6-succinyllysine is present on Lys576. Residues Lys583, Lys590, and Lys709 each carry the N6-acetyllysine; alternate modification. N6-succinyllysine; alternate occurs at positions 583, 590, and 709. The Microbody targeting signal signature appears at 720–722 (SKL). Position 721 is an N6-succinyllysine (Lys721).

It in the N-terminal section; belongs to the enoyl-CoA hydratase/isomerase family. In the C-terminal section; belongs to the 3-hydroxyacyl-CoA dehydrogenase family. As to quaternary structure, monomer. Post-translationally, acetylated, leading to enhanced enzyme activity. Acetylation is enhanced by up to 80% after treatment either with trichostin A (TCA) or with nicotinamide (NAM) with highest increase on Lys-345. Acetylation and enzyme activity increased by about 1.5% on addition of fatty acids.

It is found in the peroxisome. The enzyme catalyses a (3S)-3-hydroxyacyl-CoA = a (2E)-enoyl-CoA + H2O. It catalyses the reaction a 4-saturated-(3S)-3-hydroxyacyl-CoA = a (3E)-enoyl-CoA + H2O. It carries out the reaction a (3Z)-enoyl-CoA = a 4-saturated (2E)-enoyl-CoA. The catalysed reaction is a (3E)-enoyl-CoA = a 4-saturated (2E)-enoyl-CoA. The enzyme catalyses a (3S)-3-hydroxyacyl-CoA + NAD(+) = a 3-oxoacyl-CoA + NADH + H(+). It catalyses the reaction (2S,3S)-3-hydroxy-2-methylbutanoyl-CoA = (2E)-2-methylbut-2-enoyl-CoA + H2O. It carries out the reaction (3E,5Z)-tetradecadienoyl-CoA = (2E,5Z)-tetradecadienoyl-CoA. The catalysed reaction is (3E,5Z)-octadienoyl-CoA = (2E,5Z)-octadienoyl-CoA. The enzyme catalyses (3S)-hydroxydecanoyl-CoA + NAD(+) = 3-oxodecanoyl-CoA + NADH + H(+). It catalyses the reaction (3E)-decenoyl-CoA = (2E)-decenoyl-CoA. It carries out the reaction (3Z)-hexenoyl-CoA = (2E)-hexenoyl-CoA. The catalysed reaction is (3E)-hexenoyl-CoA = (2E)-hexenoyl-CoA. The enzyme catalyses (3S)-hydroxydecanoyl-CoA = (2E)-decenoyl-CoA + H2O. It catalyses the reaction (3S)-hydroxyhexanoyl-CoA = (2E)-hexenoyl-CoA + H2O. It carries out the reaction (3S)-hydroxyhexadecanoyl-CoA + NAD(+) = 3-oxohexadecanoyl-CoA + NADH + H(+). The catalysed reaction is (3S)-hydroxyhexadecanoyl-CoA = (2E)-hexadecenoyl-CoA + H2O. The enzyme catalyses (2E)-hexadecenedioyl-CoA + H2O = (3S)-hydroxyhexadecanedioyl-CoA. It catalyses the reaction (3S)-hydroxyhexadecanedioyl-CoA + NAD(+) = 3-oxohexadecanedioyl-CoA + NADH + H(+). It participates in lipid metabolism; fatty acid beta-oxidation. Enzyme activity enhanced by acetylation. Peroxisomal trifunctional enzyme possessing 2-enoyl-CoA hydratase, 3-hydroxyacyl-CoA dehydrogenase, and delta 3, delta 2-enoyl-CoA isomerase activities. Catalyzes two of the four reactions of the long chain fatty acids peroxisomal beta-oxidation pathway. Can also use branched-chain fatty acids such as 2-methyl-2E-butenoyl-CoA as a substrate, which is hydrated into (2S,3S)-3-hydroxy-2-methylbutanoyl-CoA. Optimal isomerase for 2,5 double bonds into 3,5 form isomerization in a range of enoyl-CoA species. Also able to isomerize both 3-cis and 3-trans double bonds into the 2-trans form in a range of enoyl-CoA species. Regulates the amount of medium-chain dicarboxylic fatty acids which are essential regulators of all fatty acid oxidation pathways. Also involved in the degradation of long-chain dicarboxylic acids through peroxisomal beta-oxidation. The protein is Peroxisomal bifunctional enzyme of Rattus norvegicus (Rat).